We begin with the raw amino-acid sequence, 465 residues long: Tyrosine 3-monooxygenase (465 aa).

His294, His299, and Glu339 together coordinate Fe cation.

The protein belongs to the biopterin-dependent aromatic amino acid hydroxylase family. Requires Fe(2+) as cofactor.

The protein localises to the cytoplasm. The protein resides in the perinuclear region. The catalysed reaction is (6R)-L-erythro-5,6,7,8-tetrahydrobiopterin + L-tyrosine + O2 = (4aS,6R)-4a-hydroxy-L-erythro-5,6,7,8-tetrahydrobiopterin + L-dopa. The protein operates within catecholamine biosynthesis; dopamine biosynthesis; dopamine from L-tyrosine: step 1/2. This Schistosoma mansoni (Blood fluke) protein is Tyrosine 3-monooxygenase (TH).